The primary structure comprises 804 residues: Ral guanine nucleotide dissociation stimulator-like 1 (804 aa).

The region spanning 101-231 (KIRSIRAGTL…RAQSLLEQLR (131 aa)) is the N-terminal Ras-GEF domain. The 270-residue stretch at 270 to 539 (EVDLVAEQLT…YVLSCEVEGL (270 aa)) folds into the Ras-GEF domain. Disordered stretches follow at residues 564–611 (NDST…TPTH) and 640–676 (SASISLASPTLPGPPCNHRRSISLTPLMSPTSPGFPP). Low complexity-rich tracts occupy residues 581–607 (PTGSSGESMDSVSVSSSDSSPSESDGM) and 640–649 (SASISLASPT). Residues 661–671 (ISLTPLMSPTS) are compositionally biased toward polar residues. Residues 684–771 (DACIIRVSLE…FDFLLRLRGS (88 aa)) form the Ras-associating domain.

In terms of biological role, probable guanine nucleotide exchange factor. The sequence is that of Ral guanine nucleotide dissociation stimulator-like 1 (rgl1) from Danio rerio (Zebrafish).